Here is a 369-residue protein sequence, read N- to C-terminus: Small RNA 2'-O-methyltransferase (369 aa).

Positions 39, 57, and 93 each coordinate S-adenosyl-L-methionine. Positions 111, 114, 115, and 161 each coordinate Mg(2+).

This sequence belongs to the methyltransferase superfamily. HEN1 family. Mg(2+) serves as cofactor.

It localises to the cytoplasm. It catalyses the reaction small RNA 3'-end nucleotide + S-adenosyl-L-methionine = small RNA 3'-end 2'-O-methylnucleotide + S-adenosyl-L-homocysteine + H(+). Methyltransferase that adds a 2'-O-methyl group at the 3'-end of piRNAs, a class of 24 to 30 nucleotide RNAs that are generated by a Dicer-independent mechanism and are primarily derived from transposons and other repeated sequence elements. This probably protects the 3'-end of piRNAs from uridylation activity and subsequent degradation. Stabilization of piRNAs is essential for gametogenesis. In Xenopus tropicalis (Western clawed frog), this protein is Small RNA 2'-O-methyltransferase (henmt1).